A 152-amino-acid polypeptide reads, in one-letter code: Nucleoside diphosphate kinase A (152 aa).

Residues K12, F60, R88, and T94 each coordinate ATP. K100 is covalently cross-linked (Glycyl lysine isopeptide (Lys-Gly) (interchain with G-Cter in ubiquitin)). ATP contacts are provided by R105 and N115. Catalysis depends on H118, which acts as the Pros-phosphohistidine intermediate. 3 positions are modified to phosphoserine: S120, S122, and S125.

The protein belongs to the NDK family. As to quaternary structure, hexamer of two different chains: An and B (A6, A5B, A4B2, A3B3, A2B4, AB5, B6). Interacts with PRUNE1. Component of the SET complex, composed of at least ANP32A, APEX1, HMGB2, NME1, SET and TREX1. Within this complex, interacts directly with SET. Also interacts with TREX1, but only following translocation to the nucleus. Mg(2+) serves as cofactor. As to expression, isoform 1 is expressed in heart, brain, placenta, lung, liver, skeletal muscle, pancreas, spleen and thymus. Expressed in lung carcinoma cell lines but not in normal lung tissues. Isoform 2 is ubiquitously expressed and its expression is also related to tumor differentiation.

It localises to the cytoplasm. The protein localises to the nucleus. The enzyme catalyses a 2'-deoxyribonucleoside 5'-diphosphate + ATP = a 2'-deoxyribonucleoside 5'-triphosphate + ADP. It carries out the reaction a ribonucleoside 5'-diphosphate + ATP = a ribonucleoside 5'-triphosphate + ADP. With respect to regulation, autophosphorylation at His-118 increases serine/threonine protein kinase activity of the enzyme. Interaction with the SET complex inhibits the endonuclease activity. Major role in the synthesis of nucleoside triphosphates other than ATP. The ATP gamma phosphate is transferred to the NDP beta phosphate via a ping-pong mechanism, using a phosphorylated active-site intermediate. Possesses nucleoside-diphosphate kinase, serine/threonine-specific protein kinase, geranyl and farnesyl pyrophosphate kinase, histidine protein kinase and 3'-5' exonuclease activities. Involved in cell proliferation, differentiation and development, signal transduction, G protein-coupled receptor endocytosis, and gene expression. Required for neural development including neural patterning and cell fate determination. During GZMA-mediated cell death, works in concert with TREX1. NME1 nicks one strand of DNA and TREX1 removes bases from the free 3' end to enhance DNA damage and prevent DNA end reannealing and rapid repair. The chain is Nucleoside diphosphate kinase A (NME1) from Homo sapiens (Human).